The primary structure comprises 770 residues: Integrin beta-2 (770 aa).

A signal peptide spans 1–22 (MLPQRPQLLLLAGLLSLQSVLS). At Q23 the chain carries Pyrrolidone carboxylic acid. Residues 23 to 701 (QECTKYKVST…DMLECVKGPN (679 aa)) lie on the Extracellular side of the membrane. Residues 24–74 (ECTKYKVSTCRDCIESGPSCAWCQKLNFTGQGEPDSTRCDTRAQLLSKGCP) form the PSI domain. 28 disulfides stabilise this stretch: C25–C43, C33–C447, C36–C62, C46–C73, C191–C198, C246–C286, C386–C400, C420–C445, C449–C467, C459–C470, C472–C481, C483–C514, C497–C512, C506–C517, C519–C534, C536–C559, C541–C557, C549–C562, C564–C573, C575–C598, C582–C596, C590–C601, C603–C612, C615–C618, C622–C663, C628–C647, C631–C643, and C671–C696. Residues N50 and N116 are each glycosylated (N-linked (GlcNAc...) asparagine). A VWFA domain is found at 124-363 (GYPIDLYYLM…ELIKSAYNKL (240 aa)). S136 and S138 together coordinate Mg(2+). 4 residues coordinate Ca(2+): S138, D141, D142, and D173. N229, D231, P233, and E234 together coordinate Ca(2+). A Mg(2+)-binding site is contributed by E234. Residue N254 is glycosylated (N-linked (GlcNAc...) asparagine). Residues D264 and E347 each coordinate Ca(2+). A Cell attachment site motif is present at residues 397-399 (RGD). 4 I-EGF domains span residues 449 to 482 (CREA…KNCE), 483 to 535 (CQTH…QFCE), 536 to 574 (CDNV…SACQ), and 575 to 613 (CLKS…PLCI). A glycan (N-linked (GlcNAc...) asparagine) is linked at N501. N-linked (GlcNAc...) asparagine glycosylation is present at N642. The helical transmembrane segment at 702–724 (IAAIVGGTVGGVVLVGILLLAIW) threads the bilayer. Residues 725 to 770 (KALTHLSDLREYHRFEKEKLKSQWNNDNPLFKSATTTVMNPKFAES) lie on the Cytoplasmic side of the membrane. A phosphoserine mark is found at S746 and S757. A phosphothreonine mark is found at T759 and T761.

It belongs to the integrin beta chain family. As to quaternary structure, heterodimer of an alpha and a beta subunit. The ITGB2 beta subunit associates with the ITGAL, ITGAM, ITGAX or ITGAD alpha subunits. Found in a complex with CD177 and ITGAM/CD11b. Interacts with FGR. Interacts with COPS5 and RANBP9. Interacts with FLNA (via filamin repeats 4, 9, 12, 17, 19, 21, and 23). Interacts with THBD. In terms of processing, both Ser-746 and Ser-757 become phosphorylated when T-cells are exposed to phorbol esters. Phosphorylation on Thr-759 (but not on Ser-757) allows interaction with 14-3-3 proteins.

The protein localises to the cell membrane. It localises to the membrane raft. Its function is as follows. Integrin ITGAL/ITGB2 is a receptor for ICAM1, ICAM2, ICAM3 and ICAM4. Integrin ITGAL/ITGB2 is also a receptor for the secreted form of ubiquitin-like protein ISG15; the interaction is mediated by ITGAL. Integrins ITGAM/ITGB2 and ITGAX/ITGB2 are receptors for the iC3b fragment of the third complement component and for fibrinogen. Integrin ITGAX/ITGB2 recognizes the sequence G-P-R in fibrinogen alpha-chain. Integrin ITGAM/ITGB2 recognizes P1 and P2 peptides of fibrinogen gamma chain. Integrin ITGAM/ITGB2 is also a receptor for factor X. Integrin ITGAD/ITGB2 is a receptor for ICAM3 and VCAM1. Contributes to natural killer cell cytotoxicity. Involved in leukocyte adhesion and transmigration of leukocytes including T-cells and neutrophils. Triggers neutrophil transmigration during lung injury through PTK2B/PYK2-mediated activation. Integrin ITGAL/ITGB2 in association with ICAM3, contributes to apoptotic neutrophil phagocytosis by macrophages. In association with alpha subunit ITGAM/CD11b, required for CD177-PRTN3-mediated activation of TNF primed neutrophils. The sequence is that of Integrin beta-2 (ITGB2) from Ovis canadensis (Bighorn sheep).